The primary structure comprises 831 residues: Pleckstrin homology-like domain family B member 1 (831 aa).

Residues 1–11 (LTLGARGRRTR) show a composition bias toward basic residues. The disordered stretch occupies residues 1-73 (LTLGARGRRT…PIPRERKNSI (73 aa)). Arginine 6 is modified (omega-N-methylarginine). Residues serine 12 and serine 14 each carry the phosphoserine modification. Threonine 16 is subject to Phosphothreonine. Residues serine 27, serine 33, serine 45, serine 49, serine 57, serine 72, serine 77, and serine 175 each carry the phosphoserine modification. Residues 39 to 51 (GSLTGASPRQSPH) show a composition bias toward polar residues. 2 disordered regions span residues 160-209 (RSGE…LQGE) and 416-465 (NGDM…QNGT). Residues 174–188 (ESMERSDEENLKEEC) are compositionally biased toward basic and acidic residues. Positions 180 to 306 (DEENLKEECS…TETKLFEDLE (127 aa)) form a coiled coil. Serine 421 and serine 467 each carry phosphoserine. Over residues 421–442 (SPLPRTRSGPLPSSSGSSSSSS) the composition is skewed to low complexity. Positions 584-603 (SMETSISTGGNSACSPDNMS) are disordered. Residues 610-676 (MGKIEEMEKM…QQLVEKEVKL (67 aa)) adopt a coiled-coil conformation. One can recognise a PH domain in the interval 721–824 (SKVCRGYLIK…WMDVIVTGAE (104 aa)).

The polypeptide is Pleckstrin homology-like domain family B member 1 (Phldb1) (Rattus norvegicus (Rat)).